Consider the following 95-residue polypeptide: Auxin-responsive protein SAUR27 (95 aa).

The protein belongs to the ARG7 family. In terms of assembly, interacts with PP2C-D1. Higher expression in thermo-responsive cultivars (e.g. cv. Alst-1, cv. Ang-0 and cv. Com-0) than in low thermo-responsive cultivars (e.g. cv. Dja-1, cv. El-0 and cv. Kon).

It localises to the cell membrane. In terms of biological role, functions as a positive effector of cell expansion through modulation of auxin transport. Involved in thermo-responsiveness of plant architecture. Enhances plasma membrane H(+)-ATPase. The sequence is that of Auxin-responsive protein SAUR27 from Arabidopsis thaliana (Mouse-ear cress).